The following is a 1173-amino-acid chain: Pleckstrin homology domain-containing family A member 6 (1173 aa).

The segment covering 1–22 (MSNKTGGKRSATINSDIANHNM) has biased composition (polar residues). Positions 1–39 (MSNKTGGKRSATINSDIANHNMVSEVPPERPNIRATRTS) are disordered. The 100-residue stretch at 59 to 158 (PVTKAGWLYK…WIQAMGEAAR (100 aa)) folds into the PH domain. Residues 163–346 (PAQKSVPQPV…PSRFYPMPRR (184 aa)) form a disordered region. Over residues 201–233 (LEPEAKTRGEGDGRGCEKAERRPERPEVKKETL) the composition is skewed to basic and acidic residues. Serine 247 and serine 251 each carry phosphoserine. 2 stretches are compositionally biased toward polar residues: residues 270–281 (NGWQYSSPSRPG) and 311–322 (RKSSMNQLQQWV). A phosphoserine mark is found at serine 314, serine 459, serine 461, and serine 472. Tyrosine 492 is modified (phosphotyrosine). Serine 665 is modified (phosphoserine). 2 disordered regions span residues 737–872 (RKNN…PRDI) and 888–984 (ALNK…RPAY). 2 stretches are compositionally biased toward low complexity: residues 761–782 (SSNS…SPFS) and 789–799 (GSPTKPGSSEE). Pro residues predominate over residues 815 to 824 (ESPPTVPPLP). Serine 864 is modified (phosphoserine). A Phosphothreonine modification is found at threonine 868. At serine 901 the chain carries Phosphoserine. Position 908 is a phosphothreonine (threonine 908). Residues 915-926 (RTTNGLTNGLSS) show a composition bias toward polar residues. Serine 925 is subject to Phosphoserine. The segment covering 940–952 (GKVKMSVEEQMDR) has biased composition (basic and acidic residues). Over residues 953–967 (MRRHQSGSMKEKRRS) the composition is skewed to basic residues. Phosphoserine occurs at positions 973, 979, and 992. At threonine 1045 the chain carries Phosphothreonine. Serine 1065 carries the phosphoserine modification. 2 disordered regions span residues 1093–1114 (PIGE…QEQE) and 1130–1173 (RGRM…TMRV). Residue threonine 1140 is modified to Phosphothreonine. Residues 1141–1155 (PSPPTSPASPTPPVN) are compositionally biased toward pro residues. Serine 1142 bears the Phosphoserine mark. Threonine 1145 carries the post-translational modification Phosphothreonine. Phosphoserine occurs at positions 1146 and 1149. Threonine 1151 is modified (phosphothreonine).

The protein is Pleckstrin homology domain-containing family A member 6 (Plekha6) of Mus musculus (Mouse).